The following is a 154-amino-acid chain: 3-hydroxyacyl-[acyl-carrier-protein] dehydratase FabZ (154 aa).

Residue His57 is part of the active site.

It belongs to the thioester dehydratase family. FabZ subfamily.

The protein resides in the cytoplasm. The catalysed reaction is a (3R)-hydroxyacyl-[ACP] = a (2E)-enoyl-[ACP] + H2O. In terms of biological role, involved in unsaturated fatty acids biosynthesis. Catalyzes the dehydration of short chain beta-hydroxyacyl-ACPs and long chain saturated and unsaturated beta-hydroxyacyl-ACPs. The protein is 3-hydroxyacyl-[acyl-carrier-protein] dehydratase FabZ of Sinorhizobium medicae (strain WSM419) (Ensifer medicae).